A 155-amino-acid polypeptide reads, in one-letter code: Deoxyuridine 5'-triphosphate nucleotidohydrolase (155 aa).

Substrate-binding positions include 74–76 (RSG), N87, and 91–93 (LID).

This sequence belongs to the dUTPase family. Mg(2+) is required as a cofactor.

The enzyme catalyses dUTP + H2O = dUMP + diphosphate + H(+). The protein operates within pyrimidine metabolism; dUMP biosynthesis; dUMP from dCTP (dUTP route): step 2/2. Functionally, this enzyme is involved in nucleotide metabolism: it produces dUMP, the immediate precursor of thymidine nucleotides and it decreases the intracellular concentration of dUTP so that uracil cannot be incorporated into DNA. This is Deoxyuridine 5'-triphosphate nucleotidohydrolase from Xanthomonas oryzae pv. oryzae (strain PXO99A).